Here is a 349-residue protein sequence, read N- to C-terminus: Terpene synthase 2 (349 aa).

A DDxx(x)D/E motif motif is present at residues D84–G89. An NDxxSxxxD/E motif motif is present at residues N229–E237.

This sequence belongs to the terpene synthase family.

It catalyses the reaction (2E,6E)-farnesyl diphosphate = (3S)-(+)-asterisca-2(9),6-diene + diphosphate. The enzyme catalyses (2E)-geranyl diphosphate = (Z)-beta-ocimene + diphosphate. The catalysed reaction is (2E)-geranyl diphosphate + H2O = linalool + diphosphate. Its function is as follows. Terpene synthase that converts its substrate farnesyl diphosphate (FPP) into the sesquiterpene (3S)-(+)-asterisca-2(9),6-diene. Is also able to convert geranyl diphosphate (GPP) into a mixture of monoterpenes including (Z)-beta-ocimene, allo-ocimene and linalool. The sequence is that of Terpene synthase 2 from Dictyostelium discoideum (Social amoeba).